The following is a 511-amino-acid chain: ATP synthase subunit alpha, mitochondrial (511 aa).

Position 171-178 (171-178 (GDRQTGKT)) interacts with ATP.

It belongs to the ATPase alpha/beta chains family. F-type ATPases have 2 components, CF(1) - the catalytic core - and CF(0) - the membrane proton channel. CF(1) has five subunits: alpha(3), beta(3), gamma(1), delta(1), epsilon(1). CF(0) has three main subunits: a, b and c.

It is found in the mitochondrion. The protein resides in the mitochondrion inner membrane. Functionally, mitochondrial membrane ATP synthase (F(1)F(0) ATP synthase or Complex V) produces ATP from ADP in the presence of a proton gradient across the membrane which is generated by electron transport complexes of the respiratory chain. F-type ATPases consist of two structural domains, F(1) - containing the extramembraneous catalytic core, and F(0) - containing the membrane proton channel, linked together by a central stalk and a peripheral stalk. During catalysis, ATP synthesis in the catalytic domain of F(1) is coupled via a rotary mechanism of the central stalk subunits to proton translocation. Subunits alpha and beta form the catalytic core in F(1). Rotation of the central stalk against the surrounding alpha(3)beta(3) subunits leads to hydrolysis of ATP in three separate catalytic sites on the beta subunits. Subunit alpha does not bear the catalytic high-affinity ATP-binding sites. The protein is ATP synthase subunit alpha, mitochondrial (ATPA) of Oenothera biennis (German evening primrose).